A 1276-amino-acid chain; its full sequence is Probable outer membrane protein pmp6 (1276 aa).

The first 23 residues, M1–A23, serve as a signal peptide directing secretion. The region spanning D981–F1276 is the Autotransporter domain.

It belongs to the PMP outer membrane protein family.

Its subcellular location is the secreted. The protein localises to the cell wall. It is found in the cell outer membrane. The protein is Probable outer membrane protein pmp6 (pmp6) of Chlamydia pneumoniae (Chlamydophila pneumoniae).